A 210-amino-acid chain; its full sequence is Outer-membrane lipoprotein LolB (210 aa).

Residues 1–18 form the signal peptide; sequence MKKFTKILSLSTLLFLAG. Cys-19 carries the N-palmitoyl cysteine lipid modification. A lipid anchor (S-diacylglycerol cysteine) is attached at Cys-19.

This sequence belongs to the LolB family. In terms of assembly, monomer.

Its subcellular location is the cell outer membrane. Functionally, plays a critical role in the incorporation of lipoproteins in the outer membrane after they are released by the LolA protein. This Actinobacillus pleuropneumoniae serotype 7 (strain AP76) protein is Outer-membrane lipoprotein LolB.